Consider the following 480-residue polypeptide: Endothelial transcription factor GATA-2 (480 aa).

Position 73 is a phosphoserine (serine 73). Arginine 86 is subject to Asymmetric dimethylarginine. Residues 119–209 (SPFSKTPLHP…GSAARGEDKD (91 aa)) form a disordered region. A compositionally biased stretch (gly residues) spans 143-153 (GAGGGSGGGSG). Residues 185–203 (PSTTGAASPASSSAGGSAA) show a composition bias toward low complexity. Phosphoserine is present on serine 192. 2 consecutive GATA-type zinc fingers follow at residues 295–319 (CVNC…CNAC) and 349–373 (CANC…CNAC). Lysine 389 is covalently cross-linked (Glycyl lysine isopeptide (Lys-Gly) (interchain with G-Cter in SUMO2)). Residues 448-480 (HSGHILPTPTPIHPSSSLSFGHPHPSSMVTAMG) are disordered.

In terms of assembly, interacts with BRD3. Interacts with AR and CCAR1. Interacts with MDFIC. As to expression, endothelial cells.

The protein resides in the nucleus. Transcriptional activator which regulates endothelin-1 gene expression in endothelial cells. Binds to the consensus sequence 5'-AGATAG-3'. This Homo sapiens (Human) protein is Endothelial transcription factor GATA-2 (GATA2).